Reading from the N-terminus, the 821-residue chain is DNA replication licensing factor MCM6 (821 aa).

Met-1 is modified (N-acetylmethionine). A phosphoserine mark is found at Ser-13, Ser-219, and Ser-271. At Thr-278 the chain carries Phosphothreonine. The 208-residue stretch at 346–553 (LYHNLCTSLF…TDYAIARRIV (208 aa)) folds into the MCM domain. Residues His-359, Ser-399, Thr-400, Ala-401, Lys-402, Ser-403, and Asn-504 each contribute to the ATP site. Residues 528-531 (SRFD) carry the Arginine finger motif. Positions 619 and 622 each coordinate ADP. Lys-643 carries the N6-acetyllysine modification. The tract at residues 676–706 (VDEGPDGINGHADSPAPASGINGHSEDMNQD) is disordered. A phosphoserine mark is found at Ser-689 and Ser-762. Thr-791 is modified (phosphothreonine).

It belongs to the MCM family. As to quaternary structure, component of the MCM2-7 complex. The complex forms a toroidal hexameric ring with the proposed subunit order MCM2-MCM6-MCM4-MCM7-MCM3-MCM5. Component of the CMG helicase complex, a hexameric ring of related MCM2-7 subunits stabilized by CDC45 and the tetrameric GINS complex. May interact with MCM10. Interacts with TIPIN. Interacts with CDT1. Interacts with MCMBP. Interacts with DDI2. O-glycosylated (O-GlcNAcylated), in a cell cycle-dependent manner.

The protein localises to the nucleus. It localises to the chromosome. It catalyses the reaction ATP + H2O = ADP + phosphate + H(+). Its function is as follows. Acts as a component of the MCM2-7 complex (MCM complex) which is the replicative helicase essential for 'once per cell cycle' DNA replication initiation and elongation in eukaryotic cells. Core component of CDC45-MCM-GINS (CMG) helicase, the molecular machine that unwinds template DNA during replication, and around which the replisome is built. The active ATPase sites in the MCM2-7 ring are formed through the interaction surfaces of two neighboring subunits such that a critical structure of a conserved arginine finger motif is provided in trans relative to the ATP-binding site of the Walker A box of the adjacent subunit. The six ATPase active sites, however, are likely to contribute differentially to the complex helicase activity. The chain is DNA replication licensing factor MCM6 (MCM6) from Bos taurus (Bovine).